The following is a 120-amino-acid chain: Large ribosomal subunit protein uL18 (120 aa).

This sequence belongs to the universal ribosomal protein uL18 family. Part of the 50S ribosomal subunit; part of the 5S rRNA/L5/L18/L25 subcomplex. Contacts the 5S and 23S rRNAs.

In terms of biological role, this is one of the proteins that bind and probably mediate the attachment of the 5S RNA into the large ribosomal subunit, where it forms part of the central protuberance. The protein is Large ribosomal subunit protein uL18 of Janthinobacterium sp. (strain Marseille) (Minibacterium massiliensis).